We begin with the raw amino-acid sequence, 224 residues long: UPF0758 protein AFE_0358 (224 aa).

In terms of domain architecture, MPN spans 102–224; it reads GLDSPLRVRQ…PLSLREQGGW (123 aa). Residues H173, H175, and D186 each contribute to the Zn(2+) site. Positions 173–186 match the JAMM motif motif; it reads HNHPSGVAEPSAAD.

Belongs to the UPF0758 family.

In Acidithiobacillus ferrooxidans (strain ATCC 23270 / DSM 14882 / CIP 104768 / NCIMB 8455) (Ferrobacillus ferrooxidans (strain ATCC 23270)), this protein is UPF0758 protein AFE_0358.